The sequence spans 559 residues: Probable inorganic carbon transporter subunit DabB1 (559 aa).

The next 13 helical transmembrane spans lie at 4–24, 33–53, 76–96, 106–126, 173–193, 202–222, 240–260, 273–293, 310–330, 375–395, 408–428, 440–460, and 487–507; these read LQWL…LFAA, LSVA…VAYI, LSSI…VYSI, PRFF…VAAG, LVLA…PTLF, ATIM…LSAF, GPTP…GFII, VLHM…VLML, MGFM…FHLI, LPWL…LVIA, GAIV…FATH, MMIL…GHAF, and GLVF…YLAS.

The protein belongs to the inorganic carbon transporter (TC 9.A.2) DabB family. Forms a complex with DabA1.

The protein resides in the cell inner membrane. In terms of biological role, part of an energy-coupled inorganic carbon pump. This Halothiobacillus neapolitanus (strain ATCC 23641 / c2) (Thiobacillus neapolitanus) protein is Probable inorganic carbon transporter subunit DabB1.